The following is a 38-amino-acid chain: MYCTRCVFAGARGGERSPAAVLSVGKIPAPIVISGYLC.

This is an uncharacterized protein from Treponema pallidum (strain Nichols).